Consider the following 713-residue polypeptide: U3 small nucleolar RNA-associated protein 8 (713 aa).

Thr-95 is modified (phosphothreonine). Ser-148 and Ser-150 each carry phosphoserine.

As to quaternary structure, interacts with snoRNA U3. Interacts with MPP10 and UTP25. Component of the ribosomal small subunit (SSU) processome composed of at least 40 protein subunits and snoRNA U3. In the absence of snoRNA3, forms a complex with other t-UTPs. This complex can associate with pre-18S ribosomal RNAs.

It localises to the nucleus. Its subcellular location is the nucleolus. Involved in nucleolar processing of pre-18S ribosomal RNA. Also has a role in nuclear tRNA export. It acts between the steps of tRNA maturation/aminoacylation and its subsequent translocation out of the nucleus. Required for optimal pre-ribosomal RNA transcription by RNA polymerase I together with a subset of U3 proteins required for transcription (t-UTPs). This is U3 small nucleolar RNA-associated protein 8 (UTP8) from Saccharomyces cerevisiae (strain ATCC 204508 / S288c) (Baker's yeast).